The following is a 452-amino-acid chain: GPI mannosyltransferase 2 (452 aa).

Topologically, residues 1 to 7 (MMEKVTK) are cytoplasmic. The helical transmembrane segment at 8–28 (LALTSRVMVLVVQLLANFATP) threads the bilayer. Topologically, residues 29-113 (DHKPDVFRMP…HLGIPLSRDA (85 aa)) are lumenal. Residues 114–134 (LILLVAVALNVLIFCKTANVL) form a helical membrane-spanning segment. At 135–161 (YKLTQRMFNDHNKSWNAALIFCFNPAS) the chain is on the cytoplasmic side. Residues 162–182 (IFFSAAYSETFFAFASFSLML) traverse the membrane as a helical segment. Residues 183-209 (ECMRSEKDFRTFRLGAALTGCFVCRSN) are Lumenal-facing. The helical transmembrane segment at 210-230 (GLLTLGFPLYFLARHILLSTG) threads the bilayer. Topologically, residues 231–238 (SVQRCWQL) are cytoplasmic. Residues 239–259 (FKMGLAMLVALGILHTYYFYI) traverse the membrane as a helical segment. Topologically, residues 260–284 (YRLYCLPDVKVQHAQHVVDYAKERS) are lumenal. The chain crosses the membrane as a helical span at residues 285-305 (FLISGQASVGSPWCGYTLPFP). Topologically, residues 306-327 (YTYVQSHYWDVGFLRYYKWKQL) are cytoplasmic. Residues 328–348 (PNFLLALPMLLFMHWHCYDYI) traverse the membrane as a helical segment. The Lumenal portion of the chain corresponds to 349 to 370 (RKLVANTWSKISPSEYQGILKE). A helical membrane pass occupies residues 371–391 (HISFPFVLHAAVLTLVCTLYV). Residues 392–398 (HIQVSTR) are Cytoplasmic-facing. Residues 399–419 (LLASATPVFYWFAADYMPNTF) traverse the membrane as a helical segment. Over 420-426 (QLSFRSK) the chain is Lumenal. The helical transmembrane segment at 427–447 (AGVLFIWCLTYSLVGTVLFSN) threads the bilayer. The Cytoplasmic portion of the chain corresponds to 448–452 (NYPWT).

The protein belongs to the PIGV family.

Its subcellular location is the endoplasmic reticulum membrane. It participates in glycolipid biosynthesis; glycosylphosphatidylinositol-anchor biosynthesis. Mannosyltransferase involved in glycosylphosphatidylinositol-anchor biosynthesis. Transfers the second mannose to the glycosylphosphatidylinositol during GPI precursor assembly. Required for the GPI-mediated endoplasmic reticulum exit and proper targeting to the cell surface of chp. Required for GPI-mediated membrane attachment of chp, qsm and Cont. Essential for microvillar stability in the rhabdomere. In Drosophila pseudoobscura pseudoobscura (Fruit fly), this protein is GPI mannosyltransferase 2.